Consider the following 270-residue polypeptide: Phosphatidylglycerol--prolipoprotein diacylglyceryl transferase (270 aa).

Transmembrane regions (helical) follow at residues Val10–Ile30, Leu56–Tyr76, Trp92–Phe112, Phe120–Ile140, Pro174–Phe194, Met202–Val222, and Trp236–Trp256. Arg139 provides a ligand contact to a 1,2-diacyl-sn-glycero-3-phospho-(1'-sn-glycerol).

This sequence belongs to the Lgt family.

It is found in the cell inner membrane. The enzyme catalyses L-cysteinyl-[prolipoprotein] + a 1,2-diacyl-sn-glycero-3-phospho-(1'-sn-glycerol) = an S-1,2-diacyl-sn-glyceryl-L-cysteinyl-[prolipoprotein] + sn-glycerol 1-phosphate + H(+). It participates in protein modification; lipoprotein biosynthesis (diacylglyceryl transfer). Catalyzes the transfer of the diacylglyceryl group from phosphatidylglycerol to the sulfhydryl group of the N-terminal cysteine of a prolipoprotein, the first step in the formation of mature lipoproteins. The chain is Phosphatidylglycerol--prolipoprotein diacylglyceryl transferase from Pseudomonas fluorescens (strain SBW25).